The sequence spans 1450 residues: ABC transporter G family member 37 (1450 aa).

One can recognise an ABC transporter 1 domain in the interval 158–431; it reads GNALHILPNK…FEFMGFRCPA (274 aa). 191 to 198 provides a ligand contact to ATP; that stretch reads GPPGSGKT. The ABC transmembrane type-2 1 domain occupies 509 to 721; sequence ELLKATIDRE…AQNAISTNEF (213 aa). A run of 6 helical transmembrane segments spans residues 527-547, 559-579, 614-634, 646-666, 670-690, and 756-776; these read FMYI…MTTF, GMIY…NGFA, IPIT…VIGF, LLLL…AGIG, VVSH…GGFI, and IGLG…TVAL. The ABC transporter 2 domain maps to 852-1104; it reads ISFNDVRYSV…KLIEYFEGID (253 aa). Residue 897–904 coordinates ATP; the sequence is GVSGAGKT. Positions 1177–1391 constitute an ABC transmembrane type-2 2 domain; it reads TQCLACLWKQ…TLYGLVASQF (215 aa). A run of 7 helical transmembrane segments spans residues 1198-1218, 1236-1256, 1284-1304, 1311-1331, 1341-1361, 1372-1392, and 1422-1442; these read AVRL…FWNL, YAAV…VVVV, LPYI…MIGF, FLWY…YGMM, IAAI…GYLI, WYCW…SQFG, and VVAV…SFAI.

This sequence belongs to the ABC transporter superfamily. ABCG family. PDR (TC 3.A.1.205) subfamily.

The protein resides in the membrane. Its function is as follows. May be a general defense protein. The polypeptide is ABC transporter G family member 37 (Oryza sativa subsp. japonica (Rice)).